The chain runs to 398 residues: MFLKNIFIALAIALLADATPTTFNNSPGFVALNFDVIKTHKNVTGPQGEINTNVNVKRQTVPVKLINEQVSYASDITVGSNKQKLTVVIDTGSSDLWVPDSQVSCQAGQGQDPNFCKNEGTYSPSSSSSSQNLNSPFSIEYGDGTTSQGTWYKDTIGFGGISITKQQFADVTSTSVDQGILGIGYKTHEAEGNYDNVPVTLKNQGIISKNAYSLYLNSRQATSGQIIFGGVDNAKYSGTLIALPVTSDNELRIHLNTVKVAGQSINADVDVLLDSGTTITYLQQGVADQVISAFNGQETYDANGNLFYLVDCNLSGSVDFAFDKNAKISVPASEFTAPLYTEDGQVYDQCQLLFGTSDYNILGDNFLRSAYIVYDLDDNEISLAQVKYTTASNIAALT.

Residues 1 to 18 (MFLKNIFIALAIALLADA) form the signal peptide. Positions 19-58 (TPTTFNNSPGFVALNFDVIKTHKNVTGPQGEINTNVNVKR) are cleaved as a propeptide — activation peptide. A glycan (N-linked (GlcNAc...) asparagine) is linked at Asn-42. Residues 72–384 (YASDITVGSN…DLDDNEISLA (313 aa)) form the Peptidase A1 domain. Asp-90 is an active-site residue. 90–92 (DTG) contributes to the pepstatin A binding site. The span at 103 to 112 (VSCQAGQGQD) shows a compositional bias: polar residues. The segment at 103–139 (VSCQAGQGQDPNFCKNEGTYSPSSSSSSQNLNSPFSI) is disordered. A disulfide bridge links Cys-105 with Cys-116. Low complexity predominate over residues 123 to 138 (SPSSSSSSQNLNSPFS). 140-143 (EYGD) contacts pepstatin A. Residues His-188, Asp-248, His-254, and Asp-270 each coordinate Zn(2+). Asp-274 is an active-site residue. 274 to 278 (DSGTT) serves as a coordination point for pepstatin A. The cysteines at positions 312 and 350 are disulfide-linked. N-linked (GlcNAc...) asparagine glycosylation occurs at Asn-313.

Belongs to the peptidase A1 family. Monomer.

It is found in the secreted. It carries out the reaction Preferential cleavage at the carboxyl of hydrophobic amino acids, but fails to cleave 15-Leu-|-Tyr-16, 16-Tyr-|-Leu-17 and 24-Phe-|-Phe-25 of insulin B chain. Activates trypsinogen, and degrades keratin.. Its activity is regulated as follows. Inhibited by pepstatin A analogs. Its function is as follows. Secreted aspartic peptidases (SAPs) are a group of ten acidic hydrolases considered as key virulence factors. These enzymes supply the fungus with nutrient amino acids as well as are able to degrade the selected host's proteins involved in the immune defense. Induces host inflammatory cytokine production in a proteolytic activity-independent way. Moreover, acts toward human hemoglobin though limited proteolysis to generate a variety of antimicrobial hemocidins, enabling to compete with the other microorganisms of the same physiological niche using the microbicidal peptides generated from the host protein. In terms of biological role, plays a key role in defense against host by cleaving histatin-5 (Hst 5), a peptide from human saliva that carries out fungicidal activity. The cleavage rate decreases in an order of SAP2 &gt; SAP9 &gt; SAP3 &gt; SAP7 &gt; SAP4 &gt; SAP1 &gt; SAP8. The first cleavage occurs between residues 'Lys-17' and 'His-18' of Hst 5, giving DSHAKRHHGYKRKFHEK and HHSHRGY peptides. Simultaneously, the DSHAKRHHGYKRK peptide is also formed. Further fragmentation by SAP3 results in DSHAKRHHGY and KRKFHEK products. The chain is Secreted aspartic protease 3 from Candida albicans (strain SC5314 / ATCC MYA-2876) (Yeast).